The chain runs to 365 residues: Serpentine receptor class epsilon-21 (365 aa).

The next 7 helical transmembrane spans lie at 49-69, 82-102, 116-136, 158-178, 189-209, 250-270, and 292-314; these read ILINFLFLLSIFVTFIGVFCI, IIISGMLLWLELVVSRSFVFI, LLFWAALLRYHYMFFGVHTLL, VWIAAILIGANFLISLTYAFL, IFIVCLAVAVVSIILLEIIYF, VVVVGAFIIMLILAECLPIIL, and PLVVVPTVVALMESFRKVFLSYY.

The protein belongs to the nematode receptor-like protein sre family.

Its subcellular location is the membrane. In Caenorhabditis elegans, this protein is Serpentine receptor class epsilon-21 (sre-21).